The chain runs to 160 residues: 2-C-methyl-D-erythritol 2,4-cyclodiphosphate synthase (160 aa).

A divalent metal cation is bound by residues D11 and H13. 4-CDP-2-C-methyl-D-erythritol 2-phosphate is bound by residues 11 to 13 (DIH) and 37 to 38 (HS). Position 45 (H45) interacts with a divalent metal cation. Residues 59–61 (DIG), 135–138 (TTNE), and R145 each bind 4-CDP-2-C-methyl-D-erythritol 2-phosphate.

Belongs to the IspF family. Homotrimer. A divalent metal cation serves as cofactor.

It carries out the reaction 4-CDP-2-C-methyl-D-erythritol 2-phosphate = 2-C-methyl-D-erythritol 2,4-cyclic diphosphate + CMP. Its pathway is isoprenoid biosynthesis; isopentenyl diphosphate biosynthesis via DXP pathway; isopentenyl diphosphate from 1-deoxy-D-xylulose 5-phosphate: step 4/6. In terms of biological role, involved in the biosynthesis of isopentenyl diphosphate (IPP) and dimethylallyl diphosphate (DMAPP), two major building blocks of isoprenoid compounds. Catalyzes the conversion of 4-diphosphocytidyl-2-C-methyl-D-erythritol 2-phosphate (CDP-ME2P) to 2-C-methyl-D-erythritol 2,4-cyclodiphosphate (ME-CPP) with a corresponding release of cytidine 5-monophosphate (CMP). This Synechococcus elongatus (strain ATCC 33912 / PCC 7942 / FACHB-805) (Anacystis nidulans R2) protein is 2-C-methyl-D-erythritol 2,4-cyclodiphosphate synthase.